The following is an 860-amino-acid chain: DNA mismatch repair protein MutS (860 aa).

607–614 (GPNMSGKS) provides a ligand contact to ATP.

The protein belongs to the DNA mismatch repair MutS family.

Its function is as follows. This protein is involved in the repair of mismatches in DNA. It is possible that it carries out the mismatch recognition step. This protein has a weak ATPase activity. The sequence is that of DNA mismatch repair protein MutS from Listeria monocytogenes serotype 4a (strain HCC23).